The following is a 331-amino-acid chain: Homoserine O-succinyltransferase (331 aa).

C141 functions as the Acyl-thioester intermediate in the catalytic mechanism. 2 residues coordinate substrate: K162 and S190. H233 serves as the catalytic Proton acceptor. E235 is a catalytic residue. Residue R247 coordinates substrate.

It belongs to the MetA family.

The protein resides in the cytoplasm. It carries out the reaction L-homoserine + succinyl-CoA = O-succinyl-L-homoserine + CoA. Its pathway is amino-acid biosynthesis; L-methionine biosynthesis via de novo pathway; O-succinyl-L-homoserine from L-homoserine: step 1/1. Transfers a succinyl group from succinyl-CoA to L-homoserine, forming succinyl-L-homoserine. The sequence is that of Homoserine O-succinyltransferase from Methylorubrum extorquens (strain DSM 6343 / CIP 106787 / DM4) (Methylobacterium extorquens).